Reading from the N-terminus, the 240-residue chain is Eukaryotic translation initiation factor 4E-2 (240 aa).

The disordered stretch occupies residues 1 to 29 (MVVMDSPVSGRMADQNIDPNTTTSPSPIE). Polar residues predominate over residues 17-26 (IDPNTTTSPS). EIF4G-binding stretches follow at residues 65–68 (HCFQ) and 75–111 (FDNP…NNIH). MRNA is bound by residues 83–88 (NQVIWG), Lys115, and 133–134 (WE). Cysteines 138 and 176 form a disulfide. Residues 159–168 (NTLLALVGEQ) are EIF4G-binding. MRNA contacts are provided by residues 183–188 (RTRGDR) and 228–232 (KTLDR).

This sequence belongs to the eukaryotic initiation factor 4E family. In terms of assembly, EIF4F is a multi-subunit complex, the composition of which varies with external and internal environmental conditions. It is composed of at least EIF4A, EIF4E and EIF4G. EIF4E is also known to interact with other partners. In higher plants two isoforms of EIF4F have been identified, named isoform EIF4F and isoform EIF(iso)4F. Isoform EIF4F has subunits p220 and p26, whereas isoform EIF(iso)4F has subunits p82 and p28. In terms of processing, according to the redox status, the Cys-138-Cys-176 disulfide bridge may have a role in regulating protein function by affecting its ability to bind capped mRNA.

The protein resides in the nucleus. The protein localises to the cytoplasm. Component of the protein complex eIF4F, which is involved in the recognition of the mRNA cap, ATP-dependent unwinding of 5'-terminal secondary structure and recruitment of mRNA to the ribosome. Recognizes and binds the 7-methylguanosine-containing mRNA cap during an early step in the initiation of protein synthesis and facilitates ribosome binding by inducing the unwinding of the mRNAs secondary structures. The sequence is that of Eukaryotic translation initiation factor 4E-2 from Arabidopsis thaliana (Mouse-ear cress).